The following is a 338-amino-acid chain: Tagatose 1,6-diphosphate aldolase (338 aa).

It belongs to the aldolase LacD family.

It catalyses the reaction D-tagatofuranose 1,6-bisphosphate = D-glyceraldehyde 3-phosphate + dihydroxyacetone phosphate. It functions in the pathway carbohydrate metabolism; D-tagatose 6-phosphate degradation; D-glyceraldehyde 3-phosphate and glycerone phosphate from D-tagatose 6-phosphate: step 2/2. The protein is Tagatose 1,6-diphosphate aldolase of Listeria innocua serovar 6a (strain ATCC BAA-680 / CLIP 11262).